A 280-amino-acid polypeptide reads, in one-letter code: Ribonuclease Z (280 aa).

The Zn(2+) site is built by His-61, His-63, Asp-65, His-66, His-153, Asp-176, and His-240. Catalysis depends on Asp-65, which acts as the Proton acceptor.

The protein belongs to the RNase Z family. As to quaternary structure, homodimer. It depends on Zn(2+) as a cofactor.

It carries out the reaction Endonucleolytic cleavage of RNA, removing extra 3' nucleotides from tRNA precursor, generating 3' termini of tRNAs. A 3'-hydroxy group is left at the tRNA terminus and a 5'-phosphoryl group is left at the trailer molecule.. Functionally, zinc phosphodiesterase, which displays some tRNA 3'-processing endonuclease activity. Probably involved in tRNA maturation, by removing a 3'-trailer from precursor tRNA. The polypeptide is Ribonuclease Z (Mycolicibacterium paratuberculosis (strain ATCC BAA-968 / K-10) (Mycobacterium paratuberculosis)).